A 248-amino-acid polypeptide reads, in one-letter code: 3-deoxy-manno-octulosonate cytidylyltransferase (248 aa).

This sequence belongs to the KdsB family.

It localises to the cytoplasm. The enzyme catalyses 3-deoxy-alpha-D-manno-oct-2-ulosonate + CTP = CMP-3-deoxy-beta-D-manno-octulosonate + diphosphate. It functions in the pathway nucleotide-sugar biosynthesis; CMP-3-deoxy-D-manno-octulosonate biosynthesis; CMP-3-deoxy-D-manno-octulosonate from 3-deoxy-D-manno-octulosonate and CTP: step 1/1. Its pathway is bacterial outer membrane biogenesis; lipopolysaccharide biosynthesis. Activates KDO (a required 8-carbon sugar) for incorporation into bacterial lipopolysaccharide in Gram-negative bacteria. This Chlorobaculum parvum (strain DSM 263 / NCIMB 8327) (Chlorobium vibrioforme subsp. thiosulfatophilum) protein is 3-deoxy-manno-octulosonate cytidylyltransferase.